Consider the following 391-residue polypeptide: DNA polymerase IV (391 aa).

The UmuC domain occupies 6–187 (IIHVDMDAFF…LPVEMLWGVG (182 aa)). Mg(2+)-binding residues include Asp10 and Asp105. Glu106 is an active-site residue.

This sequence belongs to the DNA polymerase type-Y family. As to quaternary structure, monomer. Mg(2+) is required as a cofactor.

The protein resides in the cytoplasm. The catalysed reaction is DNA(n) + a 2'-deoxyribonucleoside 5'-triphosphate = DNA(n+1) + diphosphate. Its function is as follows. Poorly processive, error-prone DNA polymerase involved in untargeted mutagenesis. Copies undamaged DNA at stalled replication forks, which arise in vivo from mismatched or misaligned primer ends. These misaligned primers can be extended by PolIV. Exhibits no 3'-5' exonuclease (proofreading) activity. May be involved in translesional synthesis, in conjunction with the beta clamp from PolIII. The sequence is that of DNA polymerase IV from Carboxydothermus hydrogenoformans (strain ATCC BAA-161 / DSM 6008 / Z-2901).